We begin with the raw amino-acid sequence, 1622 residues long: MGSMRKMSSSFKRGSIKSSTSGSQKGQKAWIEKTFCKRECIFVIPSTKDPNRCCCGQLTNQHIPPLPSGAPSTTGEDTKQADTQSGKWSVSKHTQSYPTDSYGILEFQGGGYSNKAMYIRVSYDTKPDSLLHLMVKDWQLELPKLLISVHGGLQSFEMQPKLKQVFGKGLIKAAMTTGAWIFTGGVSTGVVSHVGDALKDHSSKSRGRLCAIGIAPWGMVENKEDLIGKDVTRVYQTMSNPLSKLSVLNNSHTHFILADNGTLGKYGAEVKLRRQLEKHISLQKINTRLGQGVPVVGLVVEGGPNVVSIVLEYLKEDPPVPVVVCDGSGRASDILSFAHKYCDEGGVINESLRDQLLVTIQKTFNYSKSQSYQLFAIIMECMKKKELVTVFRMGSEGQQDVEMAILTALLKGTNASAPDQLSLALAWNRVDIARSQIFVFGPHWPPLGSLAPPVDTKATEKEKKPPTATTKGRGKGKGKKKGKVKEEVEEETDPRKLELLNWVNALEQAMLDALVLDRVDFVKLLIENGVNMQHFLTIPRLEELYNTRLGPPNTLHLLVRDVKKSNLPPDYHISLIDIGLVLEYLMGGAYRCNYTRKSFRTLYNNLFGPKRPKALKLLGMEDDEPPAKGKKKKKKKKEEEIDIDVDDPAVSRFQYPFHELMVWAVLMKRQKMAVFLWQRGEECMAKALVACKLYKAMAHESSESELVDDISQDLDNNSKDFGQLAVELLDQSYKHDEQVAMKLLTYELKNWSNSTCLKLAVAAKHRDFIAHTCSQMLLTDMWMGRLRMRKNPGLKVIMGILIPPTILFLEFRTYDDFSYQTSKENEDGKEKEEENVDANADAGSRKGDEENEHKKQRSIPIGTKICEFYNAPIVKFWFYTISYLGYLLLFNYVILVRMDGWPSPQEWIVISYIVSLALEKIREILMSEPGKLSQKIKVWLQEYWNITDLVAISMFMVGAILRLQSQPYMGYGRVIYCVDIILWYIRVLDIFGVNKYLGPYVMMIGKMMIDMLYFVVIMLVVLMSFGVARQAILHPEEKPSWKLARNIFYMPYWMIYGEVFADQIDLYAMEINPPCGENLYDEEGKRLPPCIPGAWLTPALMACYLLVANILLVNLLIAVFNNTFFEVKSISNQVWKFQRYQLIMTFHDRPVLPPPMIILSHIYIIIMRLSGRCRKKREGDQEERDRGLKLFLSDEELKKLHEFEEQCVQEHFREKEDEQQSSSDERIRVTSERVENMSMRLEEINERENFMKTSLQTVDLRLSQLEELSGRMVSALENLAGIDRSDLIQARSRASSECEATYLLRQSSINSADGYSLYRYHFNGEELLFEEPALSTSPGTAFRKKTYSFRVKDEDAKSHLDQPSNLHHTPGPSPPATPGRSRLALEGPLSTELRPGSDPGISAGEFDPRADFKSTEAAPSLNAAGVTGTQLTVESTDSHPLRESKLVRYYPGDPNTYKTMKSRSFVYTEGRKLVRGLSNWSAEYSSIMDQAWNATEWRCQVQRITRSRSTDIPYIVSEAASQDELEDEHRGSLLDPQISRSALTVSDRPEKENLLSVKPHQTLGFPCLRSRSLHGRPRSAEPAPSKLDRAGHASSTSNLAVMSVVPEGQNTQQEKRSAETEC.

Disordered regions lie at residues 1–25, 64–95, 450–490, 618–641, and 822–856; these read MGSM…GSQK, PPLP…KHTQ, LAPP…EVEE, LGME…EEEI, and SKEN…HKKQ. At 1–875 the chain is on the cytoplasmic side; that stretch reads MGSMRKMSSS…CEFYNAPIVK (875 aa). Low complexity predominate over residues 8 to 25; that stretch reads SSSFKRGSIKSSTSGSQK. Residues 70–95 show a composition bias toward polar residues; the sequence is APSTTGEDTKQADTQSGKWSVSKHTQ. The span at 472–483 shows a compositional bias: basic residues; it reads GRGKGKGKKKGK. Basic and acidic residues-rich tracts occupy residues 823-832 and 843-853; these read KENEDGKEKE and GSRKGDEENEH. A helical transmembrane segment spans residues 876 to 896; that stretch reads FWFYTISYLGYLLLFNYVILV. At 897-942 the chain is on the extracellular side; it reads RMDGWPSPQEWIVISYIVSLALEKIREILMSEPGKLSQKIKVWLQE. A helical transmembrane segment spans residues 943–963; the sequence is YWNITDLVAISMFMVGAILRL. Residues 964-973 are Cytoplasmic-facing; sequence QSQPYMGYGR. A helical membrane pass occupies residues 974 to 994; the sequence is VIYCVDIILWYIRVLDIFGVN. Residues 995 to 1006 are Extracellular-facing; it reads KYLGPYVMMIGK. A helical transmembrane segment spans residues 1007–1027; sequence MMIDMLYFVVIMLVVLMSFGV. Residues 1028 to 1099 are Cytoplasmic-facing; sequence ARQAILHPEE…CIPGAWLTPA (72 aa). Residues 1100–1120 traverse the membrane as a helical segment; the sequence is LMACYLLVANILLVNLLIAVF. The N-linked (GlcNAc...) asparagine glycan is linked to asparagine 1121. Residues 1121–1150 lie on the Extracellular side of the membrane; that stretch reads NNTFFEVKSISNQVWKFQRYQLIMTFHDRP. A helical transmembrane segment spans residues 1151–1171; the sequence is VLPPPMIILSHIYIIIMRLSG. Residues 1172–1622 lie on the Cytoplasmic side of the membrane; it reads RCRKKREGDQ…QEKRSAETEC (451 aa). Residues 1224-1252 are a coiled coil; that stretch reads DERIRVTSERVENMSMRLEEINERENFMK. Disordered stretches follow at residues 1354–1383, 1389–1408, and 1567–1622; these read EDAK…RSRL, LSTE…EFDP, and CLRS…ETEC. The segment covering 1613–1622 has biased composition (basic and acidic residues); it reads QEKRSAETEC.

This sequence belongs to the transient receptor (TC 1.A.4) family. LTrpC subfamily. TRPM1 sub-subfamily. As to quaternary structure, homodimer. Interacts with TRPM3; the interaction results in the formation of a heteromultimeric cation channel complex that are functionally different from the homomeric channels. Interacts with GPR179. Associates with both guanine nucleotide-binding proteins G(o) and beta-gamma G protein dimer; implicated in directly regulating TRPM1 channel open-state. Expressed in the retina where it localizes on dendritic tips of ON bipolar cells. Specifically, it is expressed in retinal bipolar cells (BPCs) of the ON subtype. Not detected in brain, lung, liver, heart, kidney, spleen or small intestine. Also expressed at high levels in poorly metastatic variants of B16 melanoma and at much reduced levels in highly metastatic variants of B16 melanoma.

It is found in the cell membrane. The protein localises to the endoplasmic reticulum membrane. It localises to the cell projection. The protein resides in the axon. The enzyme catalyses Ca(2+)(in) = Ca(2+)(out). It carries out the reaction Mg(2+)(in) = Mg(2+)(out). The catalysed reaction is Mn(2+)(in) = Mn(2+)(out). It catalyses the reaction Ni(2+)(in) = Ni(2+)(out). With respect to regulation, inhibited by extracellular zinc ions. Inhibited by intracellular Mg(2+). Activated by the neuroactive steroid pregnenolone sulfate. Negatively regulated by activation of GRM6 receptors in the ON-bipolar cells. Functionally, constitutively open nonselective divalent cation-conducting channels which mediate the influx of Ca(2+), Mg(2+), Mn(2+), Ba(2+), and Ni(2+) into the cytoplasm, leading to membrane depolarization. Impermeable to zinc ions. In addition, forms heteromultimeric ion channels with TRPM3 which are permeable for calcium and zinc ions. Plays an essential role for the depolarizing photoresponse of retinal ON bipolar cells. In the dark, tonic release of glutamate activates the G-protein coupled receptor for glutamate (GRM6), its activation induces the release of G(o) and the beta-gamma G protein dimer. Both subunits can interact and inactivate the TRPM1 channel. A light onset, induces decrease in glutamate release and deactivation of GRM6 leading to channel opening and membrane depolarization. May play a role in metastasis suppression. In Mus musculus (Mouse), this protein is Transient receptor potential cation channel subfamily M member 1.